The following is a 253-amino-acid chain: 5'-nucleotidase SurE (253 aa).

A divalent metal cation is bound by residues Asp8, Asp9, Ser39, and Asn95.

This sequence belongs to the SurE nucleotidase family. It depends on a divalent metal cation as a cofactor.

It is found in the cytoplasm. It carries out the reaction a ribonucleoside 5'-phosphate + H2O = a ribonucleoside + phosphate. Nucleotidase that shows phosphatase activity on nucleoside 5'-monophosphates. The polypeptide is 5'-nucleotidase SurE (Chloroflexus aggregans (strain MD-66 / DSM 9485)).